The sequence spans 520 residues: 1,4-alpha-glucan branching enzyme TTHA1902 (520 aa).

The active-site Nucleophile is the glutamate 184. Substrate contacts are provided by arginine 265 and glycine 282. The active-site Proton donor is the aspartate 353. Positions 404, 460, and 469 each coordinate substrate.

It belongs to the glycosyl hydrolase 57 family.

It catalyses the reaction Transfers a segment of a (1-&gt;4)-alpha-D-glucan chain to a primary hydroxy group in a similar glucan chain.. The protein operates within glycan biosynthesis; glycogen biosynthesis. Catalyzes the formation of branch points in alpha-glucans by cleavage of an alpha-1,4 glycosidic bond and subsequent transfer of the cleaved-off oligosaccharide to a new alpha-1,6 position. The branch chain-length distribution of the reaction products shows degree of polymerization (DP) of 3 to 13, with two local maxima at DP 7 and DP 11. Exhibits an alpha-retaining catalytic mechanism. Is involved in glycogen biosynthesis. Shows a secondary activity, i.e. the hydrolysis of the substrate, being 4% of the total activity. Can use amylose as substrate but not alpha-1,4-linked oligosaccharides of 2-7 glucose residues, beta-cyclodextrin, 6-O-glucosyl-beta-cyclodextrin and 6-O-maltosyl-beta-cyclodextrin. Is not able to branch amylopectin further, it only hydrolyzes amylopectin. Thus, displays preference for linear and long substrates (amylose) over branched structures (amylopectin). The sequence is that of 1,4-alpha-glucan branching enzyme TTHA1902 from Thermus thermophilus (strain ATCC 27634 / DSM 579 / HB8).